A 461-amino-acid polypeptide reads, in one-letter code: Ornithine decarboxylase (461 aa).

Lysine 69 bears the N6-(pyridoxal phosphate)lysine mark. Residues serine 200, glycine 237, and 274–277 (EPGR) contribute to the pyridoxal 5'-phosphate site. Serine 303 is subject to Phosphoserine; by CK2. Position 331–332 (331–332 (YD)) interacts with substrate. The active-site Proton donor; shared with dimeric partner is cysteine 360. Cysteine 360 carries the post-translational modification S-nitrosocysteine; in inhibited form. Aspartate 361 serves as a coordination point for substrate. Tyrosine 389 contributes to the pyridoxal 5'-phosphate binding site.

It belongs to the Orn/Lys/Arg decarboxylase class-II family. In terms of assembly, homodimer. Only the dimer is catalytically active, as the active sites are constructed of residues from both monomers. Does not form a heterodimer with AZIN2. Pyridoxal 5'-phosphate is required as a cofactor. In terms of processing, S-Nitrosylation inhibits the enzyme. S-Nitrosylated in vitro on 4 cysteine residues.

It catalyses the reaction L-ornithine + H(+) = putrescine + CO2. It participates in amine and polyamine biosynthesis; putrescine biosynthesis via L-ornithine pathway; putrescine from L-ornithine: step 1/1. With respect to regulation, inhibited by S-nitrosylation. Inhibited by antizymes (AZs) OAZ1, OAZ2 and OAZ3 in response to polyamine levels. AZs inhibit the assembly of the functional homodimer by binding to ODC monomers. Additionally, OAZ1 targets ODC monomers for ubiquitin-independent proteolytic destruction by the 26S proteasome. Inhibited by 1-amino-oxy-3-aminopropane (APA, an isosteric analog of putrescine). Irreversibly inhibited by alpha-difluoromethylornithine (DFMO). Catalyzes the first and rate-limiting step of polyamine biosynthesis that converts ornithine into putrescine, which is the precursor for the polyamines, spermidine and spermine. Polyamines are essential for cell proliferation and are implicated in cellular processes, ranging from DNA replication to apoptosis. This Homo sapiens (Human) protein is Ornithine decarboxylase (ODC1).